The sequence spans 204 residues: Urease accessory protein UreG (204 aa).

Residue 12 to 19 (GPVGSGKT) participates in GTP binding.

It belongs to the SIMIBI class G3E GTPase family. UreG subfamily. In terms of assembly, homodimer. UreD, UreF and UreG form a complex that acts as a GTP-hydrolysis-dependent molecular chaperone, activating the urease apoprotein by helping to assemble the nickel containing metallocenter of UreC. The UreE protein probably delivers the nickel.

It is found in the cytoplasm. In terms of biological role, facilitates the functional incorporation of the urease nickel metallocenter. This process requires GTP hydrolysis, probably effectuated by UreG. This is Urease accessory protein UreG from Azotobacter vinelandii (strain DJ / ATCC BAA-1303).